Consider the following 308-residue polypeptide: GTP cyclohydrolase MptA (308 aa).

Residues 282 to 308 are disordered; it reads NDESIHQHNAHAEREVTLGQLRDELDA.

It belongs to the GTP cyclohydrolase IV family. Homodimer. Fe(2+) is required as a cofactor.

It carries out the reaction GTP + H2O = 7,8-dihydroneopterin 2',3'-cyclic phosphate + formate + diphosphate + H(+). It functions in the pathway cofactor biosynthesis; 5,6,7,8-tetrahydromethanopterin biosynthesis. Converts GTP to 7,8-dihydro-D-neopterin 2',3'-cyclic phosphate, the first intermediate in the biosynthesis of coenzyme methanopterin. Involved in archaeosine (G(+)) and folate biosynthesis. This is GTP cyclohydrolase MptA from Haloferax volcanii (strain ATCC 29605 / DSM 3757 / JCM 8879 / NBRC 14742 / NCIMB 2012 / VKM B-1768 / DS2) (Halobacterium volcanii).